The following is a 319-amino-acid chain: 33 kDa chaperonin (319 aa).

2 disulfide bridges follow: Cys239/Cys241 and Cys272/Cys275. Residues 300-319 (EVSEEMKKAEEKEKEEKNKK) are disordered.

This sequence belongs to the HSP33 family. In terms of processing, under oxidizing conditions two disulfide bonds are formed involving the reactive cysteines. Under reducing conditions zinc is bound to the reactive cysteines and the protein is inactive.

It localises to the cytoplasm. Functionally, redox regulated molecular chaperone. Protects both thermally unfolding and oxidatively damaged proteins from irreversible aggregation. Plays an important role in the bacterial defense system toward oxidative stress. The chain is 33 kDa chaperonin from Clostridium perfringens (strain ATCC 13124 / DSM 756 / JCM 1290 / NCIMB 6125 / NCTC 8237 / Type A).